Reading from the N-terminus, the 365-residue chain is Chorismate synthase (365 aa).

R46 lines the NADP(+) pocket. Residues 124-126 (RAS), G284, 299-303 (KPTPS), and R326 each bind FMN.

This sequence belongs to the chorismate synthase family. FMNH2 serves as cofactor.

The catalysed reaction is 5-O-(1-carboxyvinyl)-3-phosphoshikimate = chorismate + phosphate. Its pathway is metabolic intermediate biosynthesis; chorismate biosynthesis; chorismate from D-erythrose 4-phosphate and phosphoenolpyruvate: step 7/7. Its function is as follows. Catalyzes the anti-1,4-elimination of the C-3 phosphate and the C-6 proR hydrogen from 5-enolpyruvylshikimate-3-phosphate (EPSP) to yield chorismate, which is the branch point compound that serves as the starting substrate for the three terminal pathways of aromatic amino acid biosynthesis. This reaction introduces a second double bond into the aromatic ring system. The chain is Chorismate synthase from Pyrobaculum islandicum (strain DSM 4184 / JCM 9189 / GEO3).